The primary structure comprises 476 residues: Sulfate adenylyltransferase subunit 1 (476 aa).

In terms of domain architecture, tr-type G spans 24 to 239 (KSLLRFLTCG…LLETVDVDYE (216 aa)). Residues 33–40 (GSVDDGKS) form a G1 region. A GTP-binding site is contributed by 33–40 (GSVDDGKS). The interval 91–95 (GITID) is G2. The G3 stretch occupies residues 112-115 (DTPG). GTP is bound by residues 112–116 (DTPGH) and 167–170 (NKMD). Residues 167–170 (NKMD) are G4. The G5 stretch occupies residues 205-207 (SAL).

It belongs to the TRAFAC class translation factor GTPase superfamily. Classic translation factor GTPase family. CysN/NodQ subfamily. In terms of assembly, heterodimer composed of CysD, the smaller subunit, and CysN.

The catalysed reaction is sulfate + ATP + H(+) = adenosine 5'-phosphosulfate + diphosphate. The protein operates within sulfur metabolism; hydrogen sulfide biosynthesis; sulfite from sulfate: step 1/3. In terms of biological role, with CysD forms the ATP sulfurylase (ATPS) that catalyzes the adenylation of sulfate producing adenosine 5'-phosphosulfate (APS) and diphosphate, the first enzymatic step in sulfur assimilation pathway. APS synthesis involves the formation of a high-energy phosphoric-sulfuric acid anhydride bond driven by GTP hydrolysis by CysN coupled to ATP hydrolysis by CysD. This chain is Sulfate adenylyltransferase subunit 1, found in Vibrio parahaemolyticus serotype O3:K6 (strain RIMD 2210633).